A 56-amino-acid polypeptide reads, in one-letter code: Large ribosomal subunit protein bL33 (56 aa).

This sequence belongs to the bacterial ribosomal protein bL33 family.

The sequence is that of Large ribosomal subunit protein bL33 from Marinomonas sp. (strain MWYL1).